A 503-amino-acid chain; its full sequence is D-alanine--D-alanyl carrier protein ligase (503 aa).

151–152 contacts ATP; it reads TS. Asp-196 is a D-alanine binding site. 291–296 provides a ligand contact to ATP; it reads NTYGPT. Position 300 (Val-300) interacts with D-alanine. ATP is bound by residues Asp-382, 393-396, and Lys-491; that span reads YNGR. Lys-491 lines the D-alanine pocket.

It belongs to the ATP-dependent AMP-binding enzyme family. DltA subfamily.

It localises to the cytoplasm. It catalyses the reaction holo-[D-alanyl-carrier protein] + D-alanine + ATP = D-alanyl-[D-alanyl-carrier protein] + AMP + diphosphate. Its pathway is cell wall biogenesis; lipoteichoic acid biosynthesis. Catalyzes the first step in the D-alanylation of lipoteichoic acid (LTA), the activation of D-alanine and its transfer onto the D-alanyl carrier protein (Dcp) DltC. In an ATP-dependent two-step reaction, forms a high energy D-alanyl-AMP intermediate, followed by transfer of the D-alanyl residue as a thiol ester to the phosphopantheinyl prosthetic group of the Dcp. D-alanylation of LTA plays an important role in modulating the properties of the cell wall in Gram-positive bacteria, influencing the net charge of the cell wall. The protein is D-alanine--D-alanyl carrier protein ligase of Bacillus anthracis (strain A0248).